The following is a 72-amino-acid chain: uncharacterized protein (72 aa).

The segment at 51–72 (AKGGRQKGEVVGVDDQCKEHKE) is disordered.

This sequence belongs to the YiiE family.

This is an uncharacterized protein from Escherichia coli O157:H7.